Here is a 500-residue protein sequence, read N- to C-terminus: Gamma-glutamylanilide synthase (500 aa).

The GS beta-grasp domain maps to 32 to 136; it reads LGLEMIRLSW…MLADLHWKSG (105 aa). The 358-residue stretch at 143–500 folds into the GS catalytic domain; the sequence is PRGIMKKAVK…WEQKEYFNLL (358 aa).

This sequence belongs to the glutamine synthetase family. As to quaternary structure, homohexamer.

It carries out the reaction aniline + L-glutamate + ATP = N(5)-phenyl-L-glutamine + ADP + phosphate. Its function is as follows. Involved in the initial oxidation of aniline to catechol by the release of its amino group. Catalyzes the ATP-dependent ligation of L-glutamate to aniline to yield gamma-glutamylanilide (gamma-GA). AtdA1 has a broad substrate range and is able to convert the following anilines, including chlorinated and methylated forms of aniline: aniline (100%), o-chloroaniline (92%), m-chloroaniline (69%), p-chloroaniline (92%), o-methylaniline (40%), m-methylaniline (27%) and p-methylaniline (45%). This chain is Gamma-glutamylanilide synthase, found in Acinetobacter sp.